Consider the following 439-residue polypeptide: ATP-dependent RNA helicase RhlB (439 aa).

Positions 9–37 (QKFADLPLHPEVKQALAENGFEFCTPIQA) match the Q motif motif. The Helicase ATP-binding domain maps to 40–219 (LPVLLQSKDI…YDHMNEPVKV (180 aa)). Residue 53–60 (AQTGTGKT) participates in ATP binding. Residues 165 to 168 (DEAD) carry the DEAD box motif. Residues 243-390 (KMRLLLTLIE…VSNYDRDALL (148 aa)) form the Helicase C-terminal domain. The tract at residues 395 to 439 (PPVKIHRRHPAGARNLRERSGAGRPQGAHRSGGRPPRHDRTRRQP) is disordered. The segment covering 425-439 (SGGRPPRHDRTRRQP) has biased composition (basic residues).

This sequence belongs to the DEAD box helicase family. RhlB subfamily. In terms of assembly, component of the RNA degradosome, which is a multiprotein complex involved in RNA processing and mRNA degradation.

The protein localises to the cytoplasm. The enzyme catalyses ATP + H2O = ADP + phosphate + H(+). Functionally, DEAD-box RNA helicase involved in RNA degradation. Has RNA-dependent ATPase activity and unwinds double-stranded RNA. The sequence is that of ATP-dependent RNA helicase RhlB from Shewanella sp. (strain ANA-3).